The primary structure comprises 460 residues: Nuclear transport factor 2 (460 aa).

An NTF2 domain is found at 15–131 (VGRAFVEQYY…YFVLNDVFRF (117 aa)). Disordered stretches follow at residues 207–226 (EPPT…GDAP), 238–289 (KSSP…VDVE), and 361–460 (RQAV…GGSS). An RRM domain is found at 293–370 (HSIYVRNLPF…RQAVVEEKKT (78 aa)). A compositionally biased stretch (gly residues) spans 373-382 (RGGGNNGGSR). Residues 383–394 (GRYFSGRGSFRN) are compositionally biased toward low complexity. Composition is skewed to gly residues over residues 399-416 (GGRG…GGEF) and 450-460 (GRGGARGGGSS).

Interacts with MBD6.

The protein resides in the cytoplasm. Its subcellular location is the nucleus. Its function is as follows. Involved in RNA-directed DNA methylation (RdDM). The sequence is that of Nuclear transport factor 2 from Arabidopsis thaliana (Mouse-ear cress).